The primary structure comprises 521 residues: MANVNGSFVSPSADATISPQLFYNVDSLSAVLNGFTFWKALATLFFAAVIYDQLRYFYLKGSLVGPTFKLPFMGPFLQSVNPKFHEYKAKWDSGELSCVSVFHKFVVIASTRDMSRKIFNSPAYVKPCVVDIAHKLLGPDNWVFLDGKEHVEFRKGLNGLFTRSALSSYLPVMEECYNKYYKYFLEKSKANDYKPEPWMPEFRELMCAVSCRTFVGHYMTDAAIKKIADDYYMITAALELVNFPFILPFTKAWYGKKASDMVLEEFSNCAAKSKAHMAAGGEITCIMDAWVKAQQDSAKYNEKIAKGLPVEDSEKPSHLLREFTDYEIAQTVFTLLFASQDATSAACTWLFQLVADRPDVLEKIREENLRVRNGNINAPLTMDLLDEMKYTRAVVRETLRYRPPVIMVPYLVKKDFPITDSITVSKGSMIIPSVWPATHDPEAYPNPDSFDPDRWITGDAEKQAKNFLVFGTGPHYCLGQTYAQLNLIAMIGKASLEMDWEHAPTPKSEDIKVFATIFPEV.

Residues 30 to 50 (AVLNGFTFWKALATLFFAAVI) form a helical membrane-spanning segment.

Belongs to the cytochrome P450 family. It depends on heme as a cofactor.

Its subcellular location is the endoplasmic reticulum membrane. It catalyses the reaction 5-dehydroepisterol + NADPH + O2 + H(+) = ergosta-5,7,22,24(28)-tetraen-3beta-ol + NADP(+) + 2 H2O. The protein operates within steroid metabolism; ergosterol biosynthesis. Functionally, C-22 sterol desaturase; part of the third module of ergosterol biosynthesis pathway that includes the late steps of the pathway. Erg5 converts 5-dehydroepisterol into ergosta-5,7,22,24(28)-tetraen-3beta-ol by forming the C-22(23) double bond in the sterol side chain. The third module or late pathway involves the ergosterol synthesis itself through consecutive reactions that mainly occur in the endoplasmic reticulum (ER) membrane. Firstly, the squalene synthase erg9 catalyzes the condensation of 2 farnesyl pyrophosphate moieties to form squalene, which is the precursor of all steroids. Squalene synthase is crucial for balancing the incorporation of farnesyl diphosphate (FPP) into sterol and nonsterol isoprene synthesis. Secondly, squalene is converted into lanosterol by the consecutive action of the squalene epoxidase erg1 and the lanosterol synthase erg7. Then, the delta(24)-sterol C-methyltransferase erg6 methylates lanosterol at C-24 to produce eburicol. Eburicol is the substrate of the sterol 14-alpha demethylase encoded by cyp51A and cyp51B, to yield 4,4,24-trimethyl ergosta-8,14,24(28)-trienol. The C-14 reductase erg24 then reduces the C14=C15 double bond which leads to 4,4-dimethylfecosterol. A sequence of further demethylations at C-4, involving the C-4 demethylation complex containing the C-4 methylsterol oxidases erg25A or erg25B, the sterol-4-alpha-carboxylate 3-dehydrogenase erg26 and the 3-keto-steroid reductase erg27, leads to the production of fecosterol via 4-methylfecosterol. The C-8 sterol isomerase erg2 then catalyzes the reaction which results in unsaturation at C-7 in the B ring of sterols and thus converts fecosterol to episterol. The sterol-C5-desaturase erg3B then catalyzes the introduction of a C-5 double bond in the B ring to produce 5-dehydroepisterol. The 2 other sterol-C5-desaturases, erg3A and erg3C, seem to be less important in ergosterol biosynthesis. The C-22 sterol desaturase erg5 further converts 5-dehydroepisterol into ergosta-5,7,22,24(28)-tetraen-3beta-ol by forming the C-22(23) double bond in the sterol side chain. Finally, ergosta-5,7,22,24(28)-tetraen-3beta-ol is substrate of the C-24(28) sterol reductases erg4A and erg4B to produce ergosterol. Possible alternative sterol biosynthetic pathways might exist from fecosterol to ergosterol, depending on the activities of the erg3 isoforms. The protein is C-22 sterol desaturase erg5 of Aspergillus fumigatus (strain ATCC MYA-4609 / CBS 101355 / FGSC A1100 / Af293) (Neosartorya fumigata).